Here is a 286-residue protein sequence, read N- to C-terminus: MAEARTSRWYFGGLASCGAACCTHPLDLLKVHLQTQQEVKLRMTGMALQVVRTDGFLALYNGLSASLCRQMTYSLTRFAIYETMRDYMTKDSQGPLPFYSKVLLGGISGLTGGFVGTPADLVNVRMQNDMKLPLSQRRNYSHALDGLYRVAREEGLKKLFSGATMASSRGALVTVGQLSCYDQAKQLVLSTGYLSDNIFTHFLSSFIAGGCATFLCQPLDVLKTRLMNSKGEYQGVFHCAVETAKLGPQAFFKGLVPAGVRLVPHTVLTFMFLEQLRKHFGIKVAT.

3 Solcar repeats span residues 7–87, 100–187, and 196–279; these read SRWY…MRDY, SKVL…AKQL, and DNIF…LRKH. 3 helical membrane passes run 9-29, 62-81, and 102-122; these read WYFG…LDLL, GLSA…FAIY, and VLLG…ADLV. Position 158 is an N6-acetyllysine (Lys-158). 3 consecutive transmembrane segments (helical) span residues 162–181, 202–222, and 254–274; these read GATM…LSCY, FLSS…LDVL, and GLVP…MFLE.

This sequence belongs to the mitochondrial carrier (TC 2.A.29) family. In terms of tissue distribution, expressed most strongly in liver, then kidney, and at lower levels in heart and brain.

It localises to the mitochondrion inner membrane. It catalyses the reaction (S)-malate(in) + phosphate(out) = (S)-malate(out) + phosphate(in). It carries out the reaction malonate(out) + (S)-malate(in) = malonate(in) + (S)-malate(out). The enzyme catalyses (S)-malate(in) + succinate(out) = (S)-malate(out) + succinate(in). The catalysed reaction is (S)-malate(in) + sulfate(out) = (S)-malate(out) + sulfate(in). It catalyses the reaction malonate(out) + phosphate(in) = malonate(in) + phosphate(out). It carries out the reaction succinate(out) + phosphate(in) = succinate(in) + phosphate(out). The enzyme catalyses sulfate(out) + phosphate(in) = sulfate(in) + phosphate(out). The catalysed reaction is malonate(out) + succinate(in) = malonate(in) + succinate(out). Its function is as follows. Catalyzes the electroneutral exchange or flux of physiologically important metabolites such as dicarboxylates (malonate, malate, succinate), inorganic sulfur-containing anions, and phosphate, across mitochondrial inner membrane. Plays an important role in gluconeogenesis, fatty acid metabolism, urea synthesis, and sulfur metabolism, particularly in liver, by supplying the substrates for the different metabolic processes. Regulates fatty acid release from adipocytes, and contributes to systemic insulin sensitivity. The sequence is that of Mitochondrial dicarboxylate carrier from Rattus norvegicus (Rat).